A 142-amino-acid polypeptide reads, in one-letter code: Transcriptional regulator MraZ (142 aa).

SpoVT-AbrB domains lie at 5–51 (ASAL…PRPE) and 77–120 (AMDV…DAQT).

The protein belongs to the MraZ family. As to quaternary structure, forms oligomers.

The protein resides in the cytoplasm. It localises to the nucleoid. This is Transcriptional regulator MraZ from Paraburkholderia phytofirmans (strain DSM 17436 / LMG 22146 / PsJN) (Burkholderia phytofirmans).